Consider the following 101-residue polypeptide: Small ribosomal subunit protein bS18c (101 aa).

Belongs to the bacterial ribosomal protein bS18 family. In terms of assembly, part of the 30S ribosomal subunit.

Its subcellular location is the plastid. The protein resides in the chloroplast. This Aethionema grandiflorum (Persian stone-cress) protein is Small ribosomal subunit protein bS18c.